The primary structure comprises 87 residues: Small ribosomal subunit protein bS20 (87 aa).

Positions 1-26 (MANIKSAKKRAVQSEKARKHNASRRS) are disordered.

It belongs to the bacterial ribosomal protein bS20 family.

Functionally, binds directly to 16S ribosomal RNA. The chain is Small ribosomal subunit protein bS20 from Enterobacter sp. (strain 638).